The chain runs to 61 residues: MDTKLLDILACPVCKGPLKLSADKTELISKGAGLAYPIRDGIPVMLESEARTLTTDERLDK.

This sequence belongs to the UPF0434 family.

The chain is UPF0434 protein Pfl01_4174 from Pseudomonas fluorescens (strain Pf0-1).